Consider the following 515-residue polypeptide: SWI/SNF global transcription activator complex subunit snf59 (515 aa).

The segment at 1–226 is disordered; the sequence is MEEEDITLEH…IHHVDSKNEE (226 aa). 5 stretches are compositionally biased toward basic and acidic residues: residues 7–37, 50–59, 73–85, 94–103, and 116–125; these read TLEH…DNSN, EEPKYHDNSN, EPEH…KEST, EEPKHHDNSN, and EEPKHHDSSN. Polar residues predominate over residues 126 to 136; that stretch reads KESTNLDNSNM. Residues 140–226 show a composition bias toward basic and acidic residues; that stretch reads ENQKNFKIEE…IHHVDSKNEE (87 aa).

It belongs to the RSC7/SWP82 family. SWP82 subfamily. In terms of assembly, component of the SWI/SNF global transcription activator complex composed of at least arp9, arp42, snf5, snf22, snf30, snf59, sol1, ssr1, ssr2, ssr3, ssr4 and tfg3.

The protein localises to the nucleus. In terms of biological role, component of the SWI/SNF complex, an ATP-dependent chromatin remodeling complex, which is required for the positive and negative regulation of gene expression of a large number of genes. It changes chromatin structure by altering DNA-histone contacts within a nucleosome, leading eventually to a change in nucleosome position, thus facilitating or repressing binding of gene-specific transcription factors. This chain is SWI/SNF global transcription activator complex subunit snf59 (snf59), found in Schizosaccharomyces pombe (strain 972 / ATCC 24843) (Fission yeast).